We begin with the raw amino-acid sequence, 906 residues long: Protein translocase subunit SecA (906 aa).

Residues Gln-86, 104 to 108 (GEGKT), and Asp-511 contribute to the ATP site. Composition is skewed to basic and acidic residues over residues 853–865 (HESV…RHDE) and 877–888 (VRREGPKVKRND). Residues 853–906 (HESVIDNNQRHDEDEQEETPKVQQVRREGPKVKRNDPCPCGSGKKYKQCHGKVE) form a disordered region. Positions 890, 892, 901, and 902 each coordinate Zn(2+). Basic residues predominate over residues 896–906 (KKYKQCHGKVE).

Belongs to the SecA family. Monomer and homodimer. Part of the essential Sec protein translocation apparatus which comprises SecA, SecYEG and auxiliary proteins SecDF-YajC and YidC. Requires Zn(2+) as cofactor.

The protein resides in the cell inner membrane. Its subcellular location is the cytoplasm. It catalyses the reaction ATP + H2O + cellular proteinSide 1 = ADP + phosphate + cellular proteinSide 2.. Functionally, part of the Sec protein translocase complex. Interacts with the SecYEG preprotein conducting channel. Has a central role in coupling the hydrolysis of ATP to the transfer of proteins into and across the cell membrane, serving both as a receptor for the preprotein-SecB complex and as an ATP-driven molecular motor driving the stepwise translocation of polypeptide chains across the membrane. The protein is Protein translocase subunit SecA of Francisella tularensis subsp. novicida (strain U112).